Here is a 231-residue protein sequence, read N- to C-terminus: Probable septum site-determining protein MinC (231 aa).

The protein belongs to the MinC family. As to quaternary structure, interacts with MinD and FtsZ.

Functionally, cell division inhibitor that blocks the formation of polar Z ring septums. Rapidly oscillates between the poles of the cell to destabilize FtsZ filaments that have formed before they mature into polar Z rings. Prevents FtsZ polymerization. The sequence is that of Probable septum site-determining protein MinC from Baumannia cicadellinicola subsp. Homalodisca coagulata.